Consider the following 335-residue polypeptide: Biotin synthase (335 aa).

The region spanning 43 to 269 is the Radical SAM core domain; it reads YFGKKVKLNM…INPTKEIRIA (227 aa). [4Fe-4S] cluster-binding residues include Cys61, Cys65, and Cys68. The [2Fe-2S] cluster site is built by Cys104, Cys137, Cys197, and Arg267.

It belongs to the radical SAM superfamily. Biotin synthase family. Homodimer. Requires [4Fe-4S] cluster as cofactor. [2Fe-2S] cluster is required as a cofactor.

It carries out the reaction (4R,5S)-dethiobiotin + (sulfur carrier)-SH + 2 reduced [2Fe-2S]-[ferredoxin] + 2 S-adenosyl-L-methionine = (sulfur carrier)-H + biotin + 2 5'-deoxyadenosine + 2 L-methionine + 2 oxidized [2Fe-2S]-[ferredoxin]. The protein operates within cofactor biosynthesis; biotin biosynthesis; biotin from 7,8-diaminononanoate: step 2/2. Catalyzes the conversion of dethiobiotin (DTB) to biotin by the insertion of a sulfur atom into dethiobiotin via a radical-based mechanism. The sequence is that of Biotin synthase from Staphylococcus aureus (strain USA300).